The chain runs to 202 residues: NADH-quinone oxidoreductase subunit C (202 aa).

Belongs to the complex I 30 kDa subunit family. In terms of assembly, NDH-1 is composed of 14 different subunits. Subunits NuoB, C, D, E, F, and G constitute the peripheral sector of the complex.

It localises to the cell inner membrane. It carries out the reaction a quinone + NADH + 5 H(+)(in) = a quinol + NAD(+) + 4 H(+)(out). Functionally, NDH-1 shuttles electrons from NADH, via FMN and iron-sulfur (Fe-S) centers, to quinones in the respiratory chain. The immediate electron acceptor for the enzyme in this species is believed to be ubiquinone. Couples the redox reaction to proton translocation (for every two electrons transferred, four hydrogen ions are translocated across the cytoplasmic membrane), and thus conserves the redox energy in a proton gradient. This is NADH-quinone oxidoreductase subunit C from Bartonella henselae (strain ATCC 49882 / DSM 28221 / CCUG 30454 / Houston 1) (Rochalimaea henselae).